Here is a 283-residue protein sequence, read N- to C-terminus: Bifunctional protein FolD (283 aa).

166–168 (GAS) provides a ligand contact to NADP(+).

This sequence belongs to the tetrahydrofolate dehydrogenase/cyclohydrolase family. Homodimer.

It catalyses the reaction (6R)-5,10-methylene-5,6,7,8-tetrahydrofolate + NADP(+) = (6R)-5,10-methenyltetrahydrofolate + NADPH. It carries out the reaction (6R)-5,10-methenyltetrahydrofolate + H2O = (6R)-10-formyltetrahydrofolate + H(+). Its pathway is one-carbon metabolism; tetrahydrofolate interconversion. Catalyzes the oxidation of 5,10-methylenetetrahydrofolate to 5,10-methenyltetrahydrofolate and then the hydrolysis of 5,10-methenyltetrahydrofolate to 10-formyltetrahydrofolate. The chain is Bifunctional protein FolD from Coxiella burnetii (strain Dugway 5J108-111).